The sequence spans 271 residues: Acyl-[acyl-carrier-protein]--UDP-N-acetylglucosamine O-acyltransferase (271 aa).

The protein belongs to the transferase hexapeptide repeat family. LpxA subfamily. Homotrimer.

Its subcellular location is the cytoplasm. It carries out the reaction a (3R)-hydroxyacyl-[ACP] + UDP-N-acetyl-alpha-D-glucosamine = a UDP-3-O-[(3R)-3-hydroxyacyl]-N-acetyl-alpha-D-glucosamine + holo-[ACP]. It participates in glycolipid biosynthesis; lipid IV(A) biosynthesis; lipid IV(A) from (3R)-3-hydroxytetradecanoyl-[acyl-carrier-protein] and UDP-N-acetyl-alpha-D-glucosamine: step 1/6. Involved in the biosynthesis of lipid A, a phosphorylated glycolipid that anchors the lipopolysaccharide to the outer membrane of the cell. The protein is Acyl-[acyl-carrier-protein]--UDP-N-acetylglucosamine O-acyltransferase of Ralstonia nicotianae (strain ATCC BAA-1114 / GMI1000) (Ralstonia solanacearum).